The primary structure comprises 204 residues: Thiamine-phosphate synthase (204 aa).

Residues 32–36 and aspartate 64 each bind 4-amino-2-methyl-5-(diphosphooxymethyl)pyrimidine; that span reads QLRMK. 2 residues coordinate Mg(2+): aspartate 65 and aspartate 84. Threonine 103 contacts 4-amino-2-methyl-5-(diphosphooxymethyl)pyrimidine. Position 129-131 (129-131) interacts with 2-[(2R,5Z)-2-carboxy-4-methylthiazol-5(2H)-ylidene]ethyl phosphate; the sequence is TTT. Lysine 132 serves as a coordination point for 4-amino-2-methyl-5-(diphosphooxymethyl)pyrimidine. Glycine 165 lines the 2-[(2R,5Z)-2-carboxy-4-methylthiazol-5(2H)-ylidene]ethyl phosphate pocket.

The protein belongs to the thiamine-phosphate synthase family. Mg(2+) is required as a cofactor.

It carries out the reaction 2-[(2R,5Z)-2-carboxy-4-methylthiazol-5(2H)-ylidene]ethyl phosphate + 4-amino-2-methyl-5-(diphosphooxymethyl)pyrimidine + 2 H(+) = thiamine phosphate + CO2 + diphosphate. The catalysed reaction is 2-(2-carboxy-4-methylthiazol-5-yl)ethyl phosphate + 4-amino-2-methyl-5-(diphosphooxymethyl)pyrimidine + 2 H(+) = thiamine phosphate + CO2 + diphosphate. It catalyses the reaction 4-methyl-5-(2-phosphooxyethyl)-thiazole + 4-amino-2-methyl-5-(diphosphooxymethyl)pyrimidine + H(+) = thiamine phosphate + diphosphate. It functions in the pathway cofactor biosynthesis; thiamine diphosphate biosynthesis; thiamine phosphate from 4-amino-2-methyl-5-diphosphomethylpyrimidine and 4-methyl-5-(2-phosphoethyl)-thiazole: step 1/1. Its function is as follows. Condenses 4-methyl-5-(beta-hydroxyethyl)thiazole monophosphate (THZ-P) and 2-methyl-4-amino-5-hydroxymethyl pyrimidine pyrophosphate (HMP-PP) to form thiamine monophosphate (TMP). This is Thiamine-phosphate synthase from Bacteroides fragilis (strain ATCC 25285 / DSM 2151 / CCUG 4856 / JCM 11019 / LMG 10263 / NCTC 9343 / Onslow / VPI 2553 / EN-2).